The chain runs to 537 residues: Cytochrome P450 monooxygenase claR (537 aa).

The helical transmembrane segment at 23–43 (VVTITEVALGIITLYLLGSYI) threads the bilayer. Cysteine 454 serves as a coordination point for heme.

This sequence belongs to the cytochrome P450 family. The cofactor is heme.

The protein resides in the membrane. It catalyses the reaction (2E)-geranylhydroquinone + reduced [NADPH--hemoprotein reductase] + O2 = wigandol + oxidized [NADPH--hemoprotein reductase] + 2 H2O + H(+). It participates in secondary metabolite biosynthesis; terpenoid biosynthesis. Functionally, cytochrome P450 monooxygenase; part of the gene cluster that mediates the biosynthesis of clavilactone A, a meroterpenoid that features a unique benzo-fused ten-membered carbocyclic ring unit with an alpha,beta-epoxy-gamma-lactone moiety, forming an intriguing 10/5/3 tricyclic nested skeleton. ClaR, ClaS and ClaT are sufficient to produce clavilactone A. ClaR acts as a macrocyclase to catalyze the oxidative cyclization of the isopentenyl to the nonterpenoid moieties to form the benzo-fused macrocycle, leading to wigantol. The biosynthesis begins with the prenyltransferase claS that transfers geranyl pyrophosphate (GPP) to hydroquinone to produces geranylhydroquinone. The cytochrome P450 monooxygenase claR then catalyzes the diradical coupling reaction between the intramolecular hydroquinone and allyl moieties to form the benzo-fused ten-membered carbocyclic ring unit of wigantol. Finally the cytochrome P450 monooxygenase claT exquisitely and stereoselectively assembles the alpha,beta-epoxy-gamma-lactone moiety, producing clavilactone A via arnebinol A. The sequence is that of Cytochrome P450 monooxygenase claR from Ampulloclitocybe clavipes (Club foot).